Reading from the N-terminus, the 456-residue chain is MISRIKSFKNALNYDKMNCIEIILRRNDLMSTSFENKATNRGVITFTISQDKIKPALDKAFNKIKKDLNAPGFRKGHMPRPVFNQKFGEEVLYEDALNIVLPEAYEAAVTELGLDVVAQPKIDVVSMEKGKEWTLSAEVVTKPEVKLGDYKNLVVEVDASKEVSDEDVDAKIERERQNLAELIIKDGEAAQGDTVVIDFVGSVDGVEFDGGKGDNFSLELGSGQFIPGFEDQLVGAKAGDEVEVNVTFPESYQAEDLAGKAAKFMTTIHEVKTKEVPELDDELAKDIDEDVDTLEDLKVKYRKELEAAQETAYDDAVEGAAIELAVANAEIVDLPEEMIHEEVNRSVNEFMGNMQRQGISPEMYFQLTGTTQEDLHNQYSAEADKRVKTNLVIEAIAKAEGFEATDSEIEQEINDLATEYNMPADQVRSLLSADMLKHDIAMKKAVEVITSTASVK.

The PPIase FKBP-type domain maps to 192-277 (GDTVVIDFVG…IHEVKTKEVP (86 aa)).

It belongs to the FKBP-type PPIase family. Tig subfamily.

Its subcellular location is the cytoplasm. It carries out the reaction [protein]-peptidylproline (omega=180) = [protein]-peptidylproline (omega=0). Functionally, involved in protein export. Acts as a chaperone by maintaining the newly synthesized protein in an open conformation. Functions as a peptidyl-prolyl cis-trans isomerase. The polypeptide is Trigger factor (Streptococcus pyogenes serotype M4 (strain MGAS10750)).